Here is a 178-residue protein sequence, read N- to C-terminus: Deoxyuridine 5'-triphosphate nucleotidohydrolase (178 aa).

Belongs to the dUTPase family. The cofactor is Mg(2+).

It catalyses the reaction dUTP + H2O = dUMP + diphosphate + H(+). The protein operates within pyrimidine metabolism; dUMP biosynthesis; dUMP from dCTP (dUTP route): step 2/2. Functionally, this enzyme is involved in nucleotide metabolism: it produces dUMP, the immediate precursor of thymidine nucleotides and it decreases the intracellular concentration of dUTP so that uracil cannot be incorporated into DNA. This Fowl adenovirus A serotype 1 (strain CELO / Phelps) (FAdV-1) protein is Deoxyuridine 5'-triphosphate nucleotidohydrolase.